A 280-amino-acid chain; its full sequence is Putative pyruvate, phosphate dikinase regulatory protein (280 aa).

153–160 contributes to the ADP binding site; sequence GISRTSKT.

It belongs to the pyruvate, phosphate/water dikinase regulatory protein family. PDRP subfamily.

The catalysed reaction is N(tele)-phospho-L-histidyl/L-threonyl-[pyruvate, phosphate dikinase] + ADP = N(tele)-phospho-L-histidyl/O-phospho-L-threonyl-[pyruvate, phosphate dikinase] + AMP + H(+). The enzyme catalyses N(tele)-phospho-L-histidyl/O-phospho-L-threonyl-[pyruvate, phosphate dikinase] + phosphate + H(+) = N(tele)-phospho-L-histidyl/L-threonyl-[pyruvate, phosphate dikinase] + diphosphate. Bifunctional serine/threonine kinase and phosphorylase involved in the regulation of the pyruvate, phosphate dikinase (PPDK) by catalyzing its phosphorylation/dephosphorylation. In Bartonella quintana (strain Toulouse) (Rochalimaea quintana), this protein is Putative pyruvate, phosphate dikinase regulatory protein.